The following is a 116-amino-acid chain: Large ribosomal subunit protein bL17 (116 aa).

This sequence belongs to the bacterial ribosomal protein bL17 family. In terms of assembly, part of the 50S ribosomal subunit. Contacts protein L32.

This is Large ribosomal subunit protein bL17 from Helicobacter pylori (strain G27).